Here is a 439-residue protein sequence, read N- to C-terminus: MGKPIVAIVGRPNVGKSTLFNKLAGKRIAIVQDTPGVTRDRIYAEAEWLNYKFTMIDTGGIEPESEDIIVSQMRRQAQIAIEMANVIIFLVDGKEGLAPADEEVAQMLRKSKKPVVLVVNKIDKLKDENNAYEFYNLGIGDPVTISSSQALGLGDMLDRVVEYFKDDESDGEDDERINIAFIGKPNVGKSSLINKLLGEERLIVSDIPGTTRDSIDSYVDTEFGEFTLIDTAGLRRKSKVKEEIERYSVIRTYASIERADVCILMIDAIEGISEQDQKIIGYAHDINKAILVIVNKWDLVEKDDKTMDKFKKELKVNLSFMPYAKYLFISAKTGQRVVKVLQTAKECYDNYTKRVKTGVLNDVISQAIMMKEPPIVGTKRLKIYYVTQIGTKPPTFIFFVNDPACIHFSYQRYLENQLRENFDFQGTGIKTEFRERKEK.

2 EngA-type G domains span residues 4–168 (PIVA…KDDE) and 177–352 (INIA…DNYT). Residues 10–17 (GRPNVGKS), 57–61 (DTGGI), 120–123 (NKID), 183–190 (GKPNVGKS), 230–234 (DTAGL), and 295–298 (NKWD) contribute to the GTP site. The 85-residue stretch at 353–437 (KRVKTGVLND…GIKTEFRERK (85 aa)) folds into the KH-like domain.

It belongs to the TRAFAC class TrmE-Era-EngA-EngB-Septin-like GTPase superfamily. EngA (Der) GTPase family. As to quaternary structure, associates with the 50S ribosomal subunit.

Functionally, GTPase that plays an essential role in the late steps of ribosome biogenesis. This chain is GTPase Der, found in Clostridium botulinum (strain Loch Maree / Type A3).